The following is a 296-amino-acid chain: Bifunctional protein FolD (296 aa).

NADP(+) contacts are provided by residues 170-172 (GRS) and Ser-195.

This sequence belongs to the tetrahydrofolate dehydrogenase/cyclohydrolase family. Homodimer.

The enzyme catalyses (6R)-5,10-methylene-5,6,7,8-tetrahydrofolate + NADP(+) = (6R)-5,10-methenyltetrahydrofolate + NADPH. It carries out the reaction (6R)-5,10-methenyltetrahydrofolate + H2O = (6R)-10-formyltetrahydrofolate + H(+). The protein operates within one-carbon metabolism; tetrahydrofolate interconversion. Catalyzes the oxidation of 5,10-methylenetetrahydrofolate to 5,10-methenyltetrahydrofolate and then the hydrolysis of 5,10-methenyltetrahydrofolate to 10-formyltetrahydrofolate. In Rhodospirillum rubrum (strain ATCC 11170 / ATH 1.1.1 / DSM 467 / LMG 4362 / NCIMB 8255 / S1), this protein is Bifunctional protein FolD.